The following is a 376-amino-acid chain: UDP-N-acetylglucosamine 2-epimerase (376 aa).

Residues arginine 10, lysine 15, aspartate 95, glutamate 117, histidine 213, glutamine 271, phenylalanine 276, 290–292, glutamate 296, and arginine 313 each bind substrate; that span reads SGG.

Belongs to the UDP-N-acetylglucosamine 2-epimerase family. In terms of assembly, homodimer.

It localises to the cytoplasm. The enzyme catalyses UDP-N-acetyl-alpha-D-glucosamine = UDP-N-acetyl-alpha-D-mannosamine. The protein operates within bacterial outer membrane biogenesis; enterobacterial common antigen biosynthesis. Functionally, catalyzes the reversible epimerization at C-2 of UDP-N-acetylglucosamine (UDP-GlcNAc) and thereby provides bacteria with UDP-N-acetylmannosamine (UDP-ManNAc), the activated donor of ManNAc residues. The sequence is that of UDP-N-acetylglucosamine 2-epimerase from Salmonella typhimurium (strain LT2 / SGSC1412 / ATCC 700720).